We begin with the raw amino-acid sequence, 368 residues long: Xaa-Pro dipeptidase (368 aa).

Mn(2+)-binding residues include Asp223, Asp234, His298, Glu327, and Glu341.

Belongs to the peptidase M24B family. The cofactor is Mn(2+).

It is found in the cytoplasm. It catalyses the reaction Xaa-L-Pro dipeptide + H2O = an L-alpha-amino acid + L-proline. The chain is Xaa-Pro dipeptidase (pepQ) from Lactobacillus delbrueckii subsp. lactis.